The primary structure comprises 322 residues: Pantothenate kinase (322 aa).

ATP is bound at residue 104–111 (GSVAVGKS).

It belongs to the prokaryotic pantothenate kinase family.

It localises to the cytoplasm. It catalyses the reaction (R)-pantothenate + ATP = (R)-4'-phosphopantothenate + ADP + H(+). It participates in cofactor biosynthesis; coenzyme A biosynthesis; CoA from (R)-pantothenate: step 1/5. The sequence is that of Pantothenate kinase from Leifsonia xyli subsp. xyli (strain CTCB07).